The following is a 221-amino-acid chain: 7-cyano-7-deazaguanine synthase (221 aa).

10-20 (FSGGQDSTTCL) serves as a coordination point for ATP. Zn(2+) contacts are provided by Cys186, Cys195, Cys198, and Cys201.

This sequence belongs to the QueC family. In terms of assembly, homodimer. The cofactor is Zn(2+).

It carries out the reaction 7-carboxy-7-deazaguanine + NH4(+) + ATP = 7-cyano-7-deazaguanine + ADP + phosphate + H2O + H(+). It functions in the pathway purine metabolism; 7-cyano-7-deazaguanine biosynthesis. Its function is as follows. Catalyzes the ATP-dependent conversion of 7-carboxy-7-deazaguanine (CDG) to 7-cyano-7-deazaguanine (preQ(0)). The chain is 7-cyano-7-deazaguanine synthase from Geobacillus sp. (strain WCH70).